A 183-amino-acid polypeptide reads, in one-letter code: Small ribosomal subunit protein uS4c (183 aa).

Residues 82-143 form the S4 RNA-binding domain; it reads MRLDNILFRL…KQRSKALIQN (62 aa).

Belongs to the universal ribosomal protein uS4 family. In terms of assembly, part of the 30S ribosomal subunit. Contacts protein S5. The interaction surface between S4 and S5 is involved in control of translational fidelity.

Its subcellular location is the plastid. It is found in the chloroplast. Functionally, one of the primary rRNA binding proteins, it binds directly to 16S rRNA where it nucleates assembly of the body of the 30S subunit. Its function is as follows. With S5 and S12 plays an important role in translational accuracy. The polypeptide is Small ribosomal subunit protein uS4c (rps4) (Babiana stricta (Baboon flower)).